The chain runs to 699 residues: MLTFMELAGPTEGDGGGSVDSQLWAACAGSMSSVPPVGAAVYYFPQGHAEQASAAVDLSSARVPPLVPCRVVAVRFMADAESDEVFAKIRLVPLRPGDAVVDVGEAAAAEARREEENSRPRPTSFAKTLTQSDANNGGGFSVPRFCAETIFPELDYSSEPPVQSVCAKDVHGVEWTFRHIYRGTPRRHLLTTGWSPFVNKKQLTAGDSIVFMRDEGGNIHVGLRRAKRGFCSIGGDDESLSSIPGWDQYRGLMRRNATATATGGRTPPKGKVPPENVLTAATRATTGQPFEVLYYPRASTPEFCVRAAAVRTAMAVQWCPGMRFKMAFETEDSSRISWFMGTVAGVQASDPVRWPQSPWRLLQVTWDEPELLQNVKRVCPWLVELVSSMPNLHLPSFSPPRKKPRNPPYAELPLEGQIFTGPVFPPNPMAHDHHHHHGFPFLPFPDSSAQPAGIQGARHAQFASPFPEFHIGNLQPNLMLYAGIRLPPADRAAPAPRPPRIIISTDLTIGSPGKPDDAACSPSSGGKKIDDTKPRGFLLFGQAILTEEQIKNGNSDGRPASPNWDAEKAPNTSEGSDSGVTQGSPTKNTTPSWSLPYFGGNNISRASEYELNPGQCKVFVESETVGRSLDLSALSSFEELYACLSDMFSIGSDELRSHLVYRSPAGEVKHAGDEPFCAFVKSARKLRILTDAGSDNLGD.

3 disordered regions span residues 108 to 136, 505 to 533, and 551 to 595; these read AAEA…DANN, TDLT…DDTK, and KNGN…SWSL. Positions 110 to 119 are enriched in basic and acidic residues; the sequence is EARREEENSR. The segment covering 125-135 has biased composition (polar residues); it reads FAKTLTQSDAN. The TF-B3 DNA-binding region spans 125–227; the sequence is FAKTLTQSDA…NIHVGLRRAK (103 aa). Over residues 570-593 the composition is skewed to polar residues; the sequence is PNTSEGSDSGVTQGSPTKNTTPSW. Residues 613–693 form the PB1 domain; sequence PGQCKVFVES…RKLRILTDAG (81 aa).

Belongs to the ARF family. In terms of assembly, homodimers and heterodimers.

It localises to the nucleus. Functionally, auxin response factors (ARFs) are transcriptional factors that bind specifically to the DNA sequence 5'-TGTCTC-3' found in the auxin-responsive promoter elements (AuxREs). The protein is Auxin response factor 10 (ARF10) of Oryza sativa subsp. indica (Rice).